Consider the following 571-residue polypeptide: Potassium-transporting ATPase potassium-binding subunit (571 aa).

11 helical membrane passes run 5 to 25 (GWTQITLYGAVVLALVKPLGW), 64 to 84 (LGYAGALLLFHVFGFLVLYAI), 136 to 156 (GLTHQNFLSAATGIAVAVALI), 178 to 198 (ILYVLLPICILYTLFLVWQGI), 254 to 274 (LSNFVQMVSIFAIGAALTNVF), 285 to 305 (WAILAAMGALFLAGVAVAYWA), 330 to 350 (FDIAASALFAVVTTAASCGAV), 357 to 379 (FTALGGMIPLVNMQLGEVIIGGV), 421 to 441 (MLGILCLPLMMLGFTALATVL), 488 to 508 (LAVGMLVGRFFVIIPALAIAG), and 527 to 547 (GALFVGLLVGVILIIGGLTFF).

This sequence belongs to the KdpA family. As to quaternary structure, the system is composed of three essential subunits: KdpA, KdpB and KdpC.

The protein localises to the cell inner membrane. Functionally, part of the high-affinity ATP-driven potassium transport (or Kdp) system, which catalyzes the hydrolysis of ATP coupled with the electrogenic transport of potassium into the cytoplasm. This subunit binds the periplasmic potassium ions and delivers the ions to the membrane domain of KdpB through an intramembrane tunnel. This Methylobacterium nodulans (strain LMG 21967 / CNCM I-2342 / ORS 2060) protein is Potassium-transporting ATPase potassium-binding subunit.